The chain runs to 417 residues: Serine hydroxymethyltransferase (417 aa).

Residues Leu-121 and 125–127 (GHL) each bind (6S)-5,6,7,8-tetrahydrofolate. An N6-(pyridoxal phosphate)lysine modification is found at Lys-229. (6S)-5,6,7,8-tetrahydrofolate is bound at residue 355–357 (SPF).

This sequence belongs to the SHMT family. As to quaternary structure, homodimer. Pyridoxal 5'-phosphate serves as cofactor.

It localises to the cytoplasm. The enzyme catalyses (6R)-5,10-methylene-5,6,7,8-tetrahydrofolate + glycine + H2O = (6S)-5,6,7,8-tetrahydrofolate + L-serine. It functions in the pathway one-carbon metabolism; tetrahydrofolate interconversion. The protein operates within amino-acid biosynthesis; glycine biosynthesis; glycine from L-serine: step 1/1. In terms of biological role, catalyzes the reversible interconversion of serine and glycine with tetrahydrofolate (THF) serving as the one-carbon carrier. This reaction serves as the major source of one-carbon groups required for the biosynthesis of purines, thymidylate, methionine, and other important biomolecules. Also exhibits THF-independent aldolase activity toward beta-hydroxyamino acids, producing glycine and aldehydes, via a retro-aldol mechanism. The polypeptide is Serine hydroxymethyltransferase (Serratia proteamaculans (strain 568)).